A 197-amino-acid polypeptide reads, in one-letter code: Dephospho-CoA kinase (197 aa).

The DPCK domain maps to 2–197 (IVGLTGGIAS…YQQILSLNAA (196 aa)). Residue 10 to 15 (ASGKTL) coordinates ATP.

Belongs to the CoaE family.

It localises to the cytoplasm. It carries out the reaction 3'-dephospho-CoA + ATP = ADP + CoA + H(+). It participates in cofactor biosynthesis; coenzyme A biosynthesis; CoA from (R)-pantothenate: step 5/5. Its function is as follows. Catalyzes the phosphorylation of the 3'-hydroxyl group of dephosphocoenzyme A to form coenzyme A. This chain is Dephospho-CoA kinase, found in Dichelobacter nodosus (Bacteroides nodosus).